The sequence spans 163 residues: Sorting nexin-3 (163 aa).

The PX domain occupies 39–162; it reads VEVRDPRTHF…VRFLQDEVFN (124 aa). A 1,2-diacyl-sn-glycero-3-phospho-(1D-myo-inositol-3-phosphate) contacts are provided by arginine 82, serine 84, lysine 113, arginine 119, and arginine 128.

It belongs to the sorting nexin family.

It localises to the cytoplasm. The protein localises to the golgi apparatus membrane. The protein resides in the prevacuolar compartment membrane. In terms of biological role, required for retention of late Golgi membrane proteins. Component of the retrieval machinery that functions by direct interaction with the cytosolic tails of certain TGN membrane proteins during the sorting/budding process at the prevacuolar compartment. Binds phosphatidylinositol 3-phosphate (PtdIns(P3)). The chain is Sorting nexin-3 (SNX3) from Eremothecium gossypii (strain ATCC 10895 / CBS 109.51 / FGSC 9923 / NRRL Y-1056) (Yeast).